Here is a 215-residue protein sequence, read N- to C-terminus: MKFFIDTANINEIKEANALGVLAGVTTNPSLVAKEGVDFHERIREICNVVEGPVSAEVISLEADKMIEEGKELAKIAPNVVVKVPMTTEGLKAVKAFSDLGIRTNVTLVFSAVQALLAARAGATYVSPFLGRLDDIGHNGMDLIRQIAEIFAIHGIETEIIAASVRHSVHVTDAALNGAHIATIPANVIASLVKHPLTDQGIEKFLADWEKTQEK.

K83 (schiff-base intermediate with substrate) is an active-site residue.

Belongs to the transaldolase family. Type 3B subfamily.

The protein localises to the cytoplasm. It carries out the reaction D-sedoheptulose 7-phosphate + D-glyceraldehyde 3-phosphate = D-erythrose 4-phosphate + beta-D-fructose 6-phosphate. It functions in the pathway carbohydrate degradation; pentose phosphate pathway; D-glyceraldehyde 3-phosphate and beta-D-fructose 6-phosphate from D-ribose 5-phosphate and D-xylulose 5-phosphate (non-oxidative stage): step 2/3. Transaldolase is important for the balance of metabolites in the pentose-phosphate pathway. This Bacillus anthracis protein is Probable transaldolase 1.